The following is a 120-amino-acid chain: NAD(P)H-quinone oxidoreductase subunit 3, chloroplastic (120 aa).

3 helical membrane passes run 9–29 (IFWA…LISG), 64–84 (MFAL…PWAM), and 88–108 (VLGV…IVGL).

It belongs to the complex I subunit 3 family. In terms of assembly, NDH is composed of at least 16 different subunits, 5 of which are encoded in the nucleus.

It localises to the plastid. The protein localises to the chloroplast thylakoid membrane. It carries out the reaction a plastoquinone + NADH + (n+1) H(+)(in) = a plastoquinol + NAD(+) + n H(+)(out). The enzyme catalyses a plastoquinone + NADPH + (n+1) H(+)(in) = a plastoquinol + NADP(+) + n H(+)(out). Functionally, NDH shuttles electrons from NAD(P)H:plastoquinone, via FMN and iron-sulfur (Fe-S) centers, to quinones in the photosynthetic chain and possibly in a chloroplast respiratory chain. The immediate electron acceptor for the enzyme in this species is believed to be plastoquinone. Couples the redox reaction to proton translocation, and thus conserves the redox energy in a proton gradient. This Populus alba (White poplar) protein is NAD(P)H-quinone oxidoreductase subunit 3, chloroplastic.